Consider the following 256-residue polypeptide: Ubiquinone/menaquinone biosynthesis C-methyltransferase UbiE (256 aa).

Residues Thr79, Asp100, and 128-129 (DA) contribute to the S-adenosyl-L-methionine site.

This sequence belongs to the class I-like SAM-binding methyltransferase superfamily. MenG/UbiE family.

It catalyses the reaction a 2-demethylmenaquinol + S-adenosyl-L-methionine = a menaquinol + S-adenosyl-L-homocysteine + H(+). The catalysed reaction is a 2-methoxy-6-(all-trans-polyprenyl)benzene-1,4-diol + S-adenosyl-L-methionine = a 5-methoxy-2-methyl-3-(all-trans-polyprenyl)benzene-1,4-diol + S-adenosyl-L-homocysteine + H(+). It participates in quinol/quinone metabolism; menaquinone biosynthesis; menaquinol from 1,4-dihydroxy-2-naphthoate: step 2/2. It functions in the pathway cofactor biosynthesis; ubiquinone biosynthesis. Methyltransferase required for the conversion of demethylmenaquinol (DMKH2) to menaquinol (MKH2) and the conversion of 2-polyprenyl-6-methoxy-1,4-benzoquinol (DDMQH2) to 2-polyprenyl-3-methyl-6-methoxy-1,4-benzoquinol (DMQH2). This is Ubiquinone/menaquinone biosynthesis C-methyltransferase UbiE from Pseudomonas aeruginosa (strain LESB58).